The primary structure comprises 121 residues: Acid shock protein (121 aa).

The signal sequence occupies residues 1-21 (MKKVLALMVAATLGLSSVAFA). Residues 22–63 (ADTTATATPAATSTTATVAAQTKATQHQKHKVTKKTTEQKAQ) constitute a propeptide that is removed on maturation. Residues 40–121 (AAQTKATQHQ…AKKPVAAPAA (82 aa)) form a disordered region. The segment covering 74–83 (VQKAPVQKAQ) has biased composition (low complexity). Residues 84–93 (AAKKHVKKAS) are compositionally biased toward basic residues. Residues 94–103 (VQKAPVQKAQ) show a composition bias toward low complexity. Basic residues predominate over residues 104–113 (AAKKHHKTAK).

This sequence belongs to the Asr family. In terms of processing, proteolytic processing gives rise to the active protein.

Its subcellular location is the periplasm. Required for growth and/or survival at acidic conditions. This is Acid shock protein from Yersinia pseudotuberculosis serotype O:1b (strain IP 31758).